Consider the following 184-residue polypeptide: UPF0398 protein BCAH820_1652 (184 aa).

It belongs to the UPF0398 family.

The sequence is that of UPF0398 protein BCAH820_1652 from Bacillus cereus (strain AH820).